The sequence spans 256 residues: D-aminoacyl-tRNA deacylase (256 aa).

The protein belongs to the DtdA deacylase family. Monomer. Zn(2+) is required as a cofactor.

It catalyses the reaction a D-aminoacyl-tRNA + H2O = a tRNA + a D-alpha-amino acid + H(+). It carries out the reaction glycyl-tRNA(Ala) + H2O = tRNA(Ala) + glycine + H(+). Its function is as follows. D-aminoacyl-tRNA deacylase with broad substrate specificity. By recycling D-aminoacyl-tRNA to D-amino acids and free tRNA molecules, this enzyme counteracts the toxicity associated with the formation of D-aminoacyl-tRNA entities in vivo. The polypeptide is D-aminoacyl-tRNA deacylase (Thermoplasma volcanium (strain ATCC 51530 / DSM 4299 / JCM 9571 / NBRC 15438 / GSS1)).